A 122-amino-acid polypeptide reads, in one-letter code: Large ribosomal subunit protein uL14 (122 aa).

This sequence belongs to the universal ribosomal protein uL14 family. As to quaternary structure, part of the 50S ribosomal subunit. Forms a cluster with proteins L3 and L19. In the 70S ribosome, L14 and L19 interact and together make contacts with the 16S rRNA in bridges B5 and B8.

Binds to 23S rRNA. Forms part of two intersubunit bridges in the 70S ribosome. This is Large ribosomal subunit protein uL14 from Streptomyces coelicolor (strain ATCC BAA-471 / A3(2) / M145).